The primary structure comprises 914 residues: Calcium-activated chloride channel regulator 1 (914 aa).

An N-terminal signal peptide occupies residues methionine 1–serine 21. The segment at aspartate 46–lysine 199 is metalloprotease domain. Histidine 156 contacts Zn(2+). Glutamate 157 is a catalytic residue. Zn(2+) contacts are provided by histidine 160 and aspartate 167. One can recognise a VWFA domain in the interval isoleucine 306–leucine 475. Asparagine 503, asparagine 585, asparagine 770, asparagine 804, asparagine 810, asparagine 831, asparagine 836, and asparagine 890 each carry an N-linked (GlcNAc...) asparagine glycan.

This sequence belongs to the CLCR family. Glycosylated. In terms of processing, the 125-kDa product is autoproteolytically processed by the metalloprotease domain and yields to two cell-surface-associated subunits, a 90-kDa protein and a group of 37- to 41-kDa proteins. The cleavage is necessary for calcium-activated chloride channel (CaCC) activation activity. In terms of tissue distribution, highly expressed in small intestine and colon namely in intestinal basal crypt epithelia and goblet cells, and appendix. Weakly expressed in uterus, testis and kidney. Expressed in the airways epithelium of both asthmatic and healthy patients. Expressed in the bronchial epithelium, especially in mucus-producing goblet cells. Expressed in normal turbinate mucosa and nasal polyp. Expressed in.

It localises to the secreted. Its subcellular location is the extracellular space. The protein localises to the cell membrane. Its function is as follows. May be involved in mediating calcium-activated chloride conductance. May play critical roles in goblet cell metaplasia, mucus hypersecretion, cystic fibrosis and AHR. May be involved in the regulation of mucus production and/or secretion by goblet cells. Involved in the regulation of tissue inflammation in the innate immune response. May play a role as a tumor suppressor. Induces MUC5AC. This is Calcium-activated chloride channel regulator 1 (CLCA1) from Homo sapiens (Human).